A 336-amino-acid chain; its full sequence is Dihydroorotate dehydrogenase (quinone) (336 aa).

FMN-binding positions include 62–66 (AGLDK) and threonine 86. Substrate is bound at residue lysine 66. 111 to 115 (NRMGF) contributes to the substrate binding site. FMN contacts are provided by asparagine 139 and asparagine 172. Substrate is bound at residue asparagine 172. Serine 175 acts as the Nucleophile in catalysis. Asparagine 177 is a binding site for substrate. The FMN site is built by lysine 217 and threonine 245. 246–247 (NT) is a binding site for substrate. FMN is bound by residues glycine 268, glycine 297, and 318–319 (YT).

It belongs to the dihydroorotate dehydrogenase family. Type 2 subfamily. In terms of assembly, monomer. It depends on FMN as a cofactor.

It is found in the cell membrane. It carries out the reaction (S)-dihydroorotate + a quinone = orotate + a quinol. It functions in the pathway pyrimidine metabolism; UMP biosynthesis via de novo pathway; orotate from (S)-dihydroorotate (quinone route): step 1/1. Functionally, catalyzes the conversion of dihydroorotate to orotate with quinone as electron acceptor. The chain is Dihydroorotate dehydrogenase (quinone) from Vibrio parahaemolyticus serotype O3:K6 (strain RIMD 2210633).